We begin with the raw amino-acid sequence, 251 residues long: MTEAQRHQILLEMLAQLGFVTVEKVVERLGISPATARRDINKLDESGKLKKVRNGAEAITQQRPRWTPMNLHQAQNHDEKVRIAKAASQLVNPGESVVINCGSTAFLLGREMCGKPVQIITNYLPLANYLIDQEHDSVIIMGGQYNKSQSITLSPQGSENSLYAGHWMFTSGKGLTAEGLYKTDMLTAMAEQKMLSVVGKLVVLVDSSKIGERAGMLFSRADQIDMLITGKNANPEILQQLEAQGVSILRV.

Residues Glu3 to Ala58 enclose the HTH deoR-type domain. The H-T-H motif DNA-binding region spans Val20 to Asp39.

It localises to the cytoplasm. In terms of biological role, represses ulaG and the ulaABCDEF operon. This is HTH-type transcriptional regulator UlaR from Escherichia coli O139:H28 (strain E24377A / ETEC).